Reading from the N-terminus, the 335-residue chain is Cobalt-precorrin-5B C(1)-methyltransferase (335 aa).

The protein belongs to the CbiD family.

The enzyme catalyses Co-precorrin-5B + S-adenosyl-L-methionine = Co-precorrin-6A + S-adenosyl-L-homocysteine. It participates in cofactor biosynthesis; adenosylcobalamin biosynthesis; cob(II)yrinate a,c-diamide from sirohydrochlorin (anaerobic route): step 6/10. Catalyzes the methylation of C-1 in cobalt-precorrin-5B to form cobalt-precorrin-6A. This Methanospirillum hungatei JF-1 (strain ATCC 27890 / DSM 864 / NBRC 100397 / JF-1) protein is Cobalt-precorrin-5B C(1)-methyltransferase.